The primary structure comprises 468 residues: Adenylosuccinate synthetase (468 aa).

Residues 23 to 29 (GDEGKGK) and 51 to 53 (GHE) contribute to the GTP site. The active-site Proton acceptor is the Asp24. Mg(2+) contacts are provided by Asp24 and Gly51. Residues 24-27 (DEGK), 49-52 (NSGH), Thr142, Arg156, Asn238, Thr253, and Arg317 contribute to the IMP site. The active-site Proton donor is the His52. 313 to 319 (VTTGRTR) contacts substrate. Residues Arg319 and 345-347 (KLD) each bind GTP.

This sequence belongs to the adenylosuccinate synthetase family. Homodimer. Requires Mg(2+) as cofactor.

The protein localises to the cytoplasm. The catalysed reaction is IMP + L-aspartate + GTP = N(6)-(1,2-dicarboxyethyl)-AMP + GDP + phosphate + 2 H(+). It participates in purine metabolism; AMP biosynthesis via de novo pathway; AMP from IMP: step 1/2. Functionally, plays an important role in the salvage pathway for purine nucleotide biosynthesis. Catalyzes the first committed step in the biosynthesis of AMP from IMP. This chain is Adenylosuccinate synthetase, found in Theileria annulata.